A 95-amino-acid chain; its full sequence is Protein TusB (95 aa).

This sequence belongs to the DsrH/TusB family. As to quaternary structure, heterohexamer, formed by a dimer of trimers. The hexameric TusBCD complex contains 2 copies each of TusB, TusC and TusD. The TusBCD complex interacts with TusE.

The protein resides in the cytoplasm. Its function is as follows. Part of a sulfur-relay system required for 2-thiolation of 5-methylaminomethyl-2-thiouridine (mnm(5)s(2)U) at tRNA wobble positions. The chain is Protein TusB from Salmonella dublin (strain CT_02021853).